An 86-amino-acid polypeptide reads, in one-letter code: Large ribosomal subunit protein uL23 (86 aa).

This sequence belongs to the universal ribosomal protein uL23 family. Part of the 50S ribosomal subunit. Contacts protein L29.

Binds to 23S rRNA. One of the proteins that surrounds the polypeptide exit tunnel on the outside of the ribosome. The sequence is that of Large ribosomal subunit protein uL23 from Methanobrevibacter smithii (strain ATCC 35061 / DSM 861 / OCM 144 / PS).